The sequence spans 634 residues: MSDAATRTEGTSGGHSSSAVGLMVGAVGVCYGDIGTSPLYTLKEVFIGGYGVQANHDGVLGVLSLIFWSLIWVVSIKYVIFVLRADNQGEGGVMALSALARRAAAPFGRLQTFVVVAGLIGAALFYGDSMITPAISVLSAVEGLEIAFDGLEHWTVPLALIVLIGLFLIQKHGTARIGILFGPVMVLWFGALAALGVYGVIQQPEVLQAMNPVWAVRFFGSHPGIGVAILGATVLALTGAEALYADMGHFGRKPIARAWFLLVLPALVLNYFGQGATILSNAEAARNPFYLLAPGWALLPMVALSTLATVIASQAVISGAFSLTRQAIQLGYVPRMSIQHTSSHEQGQIYIGGVNWALMVGVVLLVLGFESSASLAAAYGVAVTGTMLITTLLMGVVIWRLWKWPLWLGVPFFCVMLAVDSLFFAANVPKVVQGGAFPVIAGIVIFILMSTWKRGRQLLVERLDEGSLPLPVFISSMRVQPPHRVQGTAIFLTARTDAVPHALLHNLLHNQVLHEQVVLLTVVNEDSPRVAPDRRFEVEAYGDGFFRVILHFGFMEEPDIPGALRLCHLNELDFSPMRTTYFLSRETVIPSRRIGMARWREGLFAFLLKNANGNLRYFNLPLNRVIELGTQVEI.

12 helical membrane passes run 19–39 (AVGLMVGAVGVCYGDIGTSPL), 62–82 (VLSLIFWSLIWVVSIKYVIFV), 113–133 (FVVVAGLIGAALFYGDSMITP), 150–170 (GLEHWTVPLALIVLIGLFLIQ), 177–197 (IGILFGPVMVLWFGALAALGV), 225–245 (IGVAILGATVLALTGAEALYA), 259–279 (WFLLVLPALVLNYFGQGATIL), 291–311 (LLAPGWALLPMVALSTLATVI), 349–369 (IYIGGVNWALMVGVVLLVLGF), 379–399 (YGVAVTGTMLITTLLMGVVIW), 406–426 (LWLGVPFFCVMLAVDSLFFAA), and 431–451 (VVQGGAFPVIAGIVIFILMST).

It belongs to the HAK/KUP transporter (TC 2.A.72) family.

It localises to the cell inner membrane. It carries out the reaction K(+)(in) + H(+)(in) = K(+)(out) + H(+)(out). Transport of potassium into the cell. Likely operates as a K(+):H(+) symporter. The chain is Probable potassium transport system protein Kup from Pseudomonas paraeruginosa (strain DSM 24068 / PA7) (Pseudomonas aeruginosa (strain PA7)).